The primary structure comprises 187 residues: Virulence protein ATR13 (187 aa).

A signal peptide spans 1-19; sequence MRLVHAVLLPGIIVFVSNG. The RxLR motif lies at 38-41; that stretch reads RQLR. Positions 50–92 are leucine heptad repeat region; sequence LSRASFGLGKAQDPLDKFFRKIINSRKPIETSYSAKGIHEKII. 4 consecutive repeat copies span residues 93–103, 104–114, 115–125, and 126–136. The 4 X 11 AA tandem repeats stretch occupies residues 93–136; the sequence is KAYDRHVFESKKAHDRHVSKSKKAHGRHVSKSKMAHDRHVSKSE. The segment at 104-136 is disordered; sequence KAHDRHVSKSKKAHGRHVSKSKMAHDRHVSKSE. The segment covering 111–125 has biased composition (basic residues); the sequence is SKSKKAHGRHVSKSK. A compositionally biased stretch (basic and acidic residues) spans 126-136; the sequence is MAHDRHVSKSE. Positions 137 to 187 are highly variable C-terminus domain; sequence KAPIQYASVADYLKKIYPGTDIERIVSTLKRHDEVGAKDLGAKLQTAVASQ.

Belongs to the RxLR effector family.

Its subcellular location is the secreted. The protein resides in the host nucleus. It is found in the host nucleolus. It localises to the host cytoplasm. In terms of biological role, secreted effector that acts as an elicitor of hypersensitive response (HR) specifically on plants carrying defense protein RPP13. Recognition of ATR13 by RPP13 initiates defense responses that are effective against oomycete, bacterial and viral pathogens. Due to high polymorphism, ATR13-Emoy2 does not recognize RPP13-Nd, the RPP13 defense protein from Arabidopsis thaliana ecotype Niederzenz. ATR13-Emoy2 is recognized by RPP13 variants RPP13-UKID44, RPP13-UKID65 and RPP13-UKID71. This Hyaloperonospora arabidopsidis (strain Emoy2) (Downy mildew agent) protein is Virulence protein ATR13.